The chain runs to 358 residues: Ganglioside-induced differentiation-associated protein 1 (358 aa).

Residues 24–105 form the GST N-terminal domain; it reads VHLILYHWTH…YLEQTFLDER (82 aa). Residues K50, K172, K173, K188, and K190 each participate in a glycyl lysine isopeptide (Lys-Gly) (interchain with G-Cter in ubiquitin) cross-link. The GST C-terminal domain occupies 153–309; that stretch reads PAYATTRIRS…LISAVLPTAF (157 aa). K203 carries the N6-acetyllysine; alternate modification. A Glycyl lysine isopeptide (Lys-Gly) (interchain with G-Cter in ubiquitin); alternate cross-link involves residue K203. Glycyl lysine isopeptide (Lys-Gly) (interchain with G-Cter in ubiquitin) cross-links involve residues K206, K207, and K214. 2 consecutive transmembrane segments (helical) span residues 292-312 and 320-340; these read VLGH…FRVA and LGST…FMLF. Residues 320 to 358 form a required for mitochondrial localization region; that stretch reads LGSTLVVGLLVGMGYFAFMLFRRRLGSMILALRPRPNYF.

The protein belongs to the GST superfamily. In terms of assembly, homodimer. In terms of processing, ubiquitinated by PRKN during mitophagy, leading to its degradation and enhancement of mitophagy. Deubiquitinated by USP30. In terms of tissue distribution, expressed in brain, spinal cord, muscles and intestinal villi. In the central nervous system expressed most prominently in the cortex, cerebellum, thalamus, olfactory bulb, and spinal cord. Expressed also in sciatic nerves and in dorsal root ganglia.

It is found in the mitochondrion outer membrane. It localises to the cytoplasm. Its function is as follows. Regulates the mitochondrial network by promoting mitochondrial fission. In Mus musculus (Mouse), this protein is Ganglioside-induced differentiation-associated protein 1 (Gdap1).